The primary structure comprises 507 residues: MRRSIATGFASIVKGFHLHSHRHRLQISNPRTAASLSLCGFCFWIRAFSSYRKILRNGLHNLQFNDALDLFTRMVHSRPLPSIIDFTRLLSVIAKMNRYDVVISLFEQMQILGIPPLLCTCNIVMHCVCLSSQPCRASCFLGKMMKLGFEPDLVTFTSLLNGYCHWNRIEDAIALFDQILGMGFKPNVVTYTTLIRCLCKNRHLNHAVELFNQMGTNGSRPNVVTYNALVTGLCEIGRWGDAAWLLRDMMKRRIEPNVITFTALIDAFVKVGKLMEAKELYNVMIQMSVYPDVFTYGSLINGLCMYGLLDEARQMFYLMERNGCYPNEVIYTTLIHGFCKSKRVEDGMKIFYEMSQKGVVANTITYTVLIQGYCLVGRPDVAQEVFNQMSSRRAPPDIRTYNVLLDGLCCNGKVEKALMIFEYMRKREMDINIVTYTIIIQGMCKLGKVEDAFDLFCSLFSKGMKPNVITYTTMISGFCRRGLIHEADSLFKKMKEDGFLPNESVYK.

The transit peptide at 1–48 directs the protein to the mitochondrion; the sequence is MRRSIATGFASIVKGFHLHSHRHRLQISNPRTAASLSLCGFCFWIRAF. 13 PPR repeats span residues 47-81, 82-116, 117-151, 152-186, 187-221, 222-256, 257-291, 292-326, 327-361, 362-396, 397-431, 432-466, and 467-501; these read AFSSYRKILRNGLHNLQFNDALDLFTRMVHSRPLP, SIIDFTRLLSVIAKMNRYDVVISLFEQMQILGIPP, LLCTCNIVMHCVCLSSQPCRASCFLGKMMKLGFEP, DLVTFTSLLNGYCHWNRIEDAIALFDQILGMGFKP, NVVTYTTLIRCLCKNRHLNHAVELFNQMGTNGSRP, NVVTYNALVTGLCEIGRWGDAAWLLRDMMKRRIEP, NVITFTALIDAFVKVGKLMEAKELYNVMIQMSVYP, DVFTYGSLINGLCMYGLLDEARQMFYLMERNGCYP, NEVIYTTLIHGFCKSKRVEDGMKIFYEMSQKGVVA, NTITYTVLIQGYCLVGRPDVAQEVFNQMSSRRAPP, DIRTYNVLLDGLCCNGKVEKALMIFEYMRKREMDI, NIVTYTIIIQGMCKLGKVEDAFDLFCSLFSKGMKP, and NVITYTTMISGFCRRGLIHEADSLFKKMKEDGFLP.

The protein belongs to the PPR family. P subfamily.

The protein localises to the mitochondrion. This Arabidopsis thaliana (Mouse-ear cress) protein is Putative pentatricopeptide repeat-containing protein At3g16710, mitochondrial.